We begin with the raw amino-acid sequence, 996 residues long: MKKIILMLLLFSIFFILKSESQNTLVLNALIYDNTPSRNPDFEASGSVGVQKNLVKSVLGSDGTPVYCCGNSPSATIHNQTTFQSWFHNVPGVNLPIQKDIILTQSLSNPNIYSYSNDSYFVIDGQGFDDKSVYPNERVYRDAFGNPHNFHFCLQAHTEFQYKTGDVFNFAGDDDVWVFINNILVVDLGGIHTIASASVNLDLLGLTPGQNYPFDFFYCERHTVESHIRIETSLAFKCPRYDECGVCEGDGTSCCTPNNCDNNPIYRTNCITAKCSNNVCVTSAPYCSSTEPCTVGLCTPGVGCSVVPKNCVNENHCTQDSCNSTINACQHDPIPDCINCAYIGCITTDYCNEQVCSADGRSCETRPKNCDDLNFCTVDTCSNGVCIYTRIDNCVNCTGPGIGCITTDQCNPNVCSPDGNSCIIQPKNCSDGNACNDPSCVSGGMCMLTPVNCDDGDDCTFDSCSSTVGCIHTNISNCVECQNIACITTDFCNVKICINNGTTCDTVPKTCDDGDSCTIDSCVSPSGACLYEPIANCVNCGGNQCITTDFCLPLICGPDGVTCAVEPKKCDDFNPCTFDSCISPQGDCGNAPIPGCVACNEILGCTTTDPCHPITCSAIGDQCVSTDKDCEDGNHCTINSCQNNNGTATCLNSLITHCTDCPGIGCTTTDFCFQQVCSATDGDVCTTVPLNCDDGLQCTVDSCIGPMGVCSHIAIAPKCLECALEPCITTDNCQPVICGPDGRCIQETIEDFCDDYNYCTVDTCTGVGCEHASISGCRNCTNGIGCTTPSDDACNLQVCSETGDSCLTMVLNCDDNNDCTEDKCLNTGICQNNPIDGCVTPSPVSIGGTIPPTTTGVSQVECDCCPIGQKCLLVNGHEICIKPATTGGIPELTTGCAGTTTGRATGHYTESGTGNPHLCDRYHCKRGMECHVVNGVPECLPSNYKCLDCLDLHCERQGDFTCFMVKNPNFISSKHSCYGESCCKFTPVCKPKGHSL.

The signal sequence occupies residues 1–21 (MKKIILMLLLFSIFFILKSES). N-linked (GlcNAc...) asparagine glycosylation is found at Asn-79, Asn-117, Asn-323, Asn-396, Asn-428, Asn-474, Asn-500, Asn-645, and Asn-779. The PA14 domain maps to 105 to 250 (QSLSNPNIYS…YDECGVCEGD (146 aa)).

It belongs to the prespore-cell-inducing factor family.

Its subcellular location is the secreted. This chain is Protein psiR (psiR), found in Dictyostelium discoideum (Social amoeba).